The chain runs to 408 residues: Imidazolonepropionase (408 aa).

Fe(3+) contacts are provided by histidine 73 and histidine 75. Zn(2+) contacts are provided by histidine 73 and histidine 75. The 4-imidazolone-5-propanoate site is built by arginine 82, tyrosine 145, and histidine 178. Position 145 (tyrosine 145) interacts with N-formimidoyl-L-glutamate. Histidine 243 lines the Fe(3+) pocket. Histidine 243 contacts Zn(2+). Glutamine 246 is a binding site for 4-imidazolone-5-propanoate. A Fe(3+)-binding site is contributed by aspartate 318. Zn(2+) is bound at residue aspartate 318. Residues asparagine 320 and glycine 322 each contribute to the N-formimidoyl-L-glutamate site. 4-imidazolone-5-propanoate is bound at residue serine 323.

Belongs to the metallo-dependent hydrolases superfamily. HutI family. The cofactor is Zn(2+). Fe(3+) is required as a cofactor.

Its subcellular location is the cytoplasm. The enzyme catalyses 4-imidazolone-5-propanoate + H2O = N-formimidoyl-L-glutamate. The protein operates within amino-acid degradation; L-histidine degradation into L-glutamate; N-formimidoyl-L-glutamate from L-histidine: step 3/3. In terms of biological role, catalyzes the hydrolytic cleavage of the carbon-nitrogen bond in imidazolone-5-propanoate to yield N-formimidoyl-L-glutamate. It is the third step in the universal histidine degradation pathway. In Shewanella loihica (strain ATCC BAA-1088 / PV-4), this protein is Imidazolonepropionase.